We begin with the raw amino-acid sequence, 319 residues long: Probable enoyl-CoA hydratase alpha subunit (319 aa).

Residues 199–298 (FEAAKQRRLV…EIGMPVVLDW (100 aa)) are DUF35.

This sequence belongs to the thioester dehydratase family. In terms of assembly, heterodimer composed of ChsH1 and ChsH2. Two heterodimers combine to form a heterotetramer. The complex interacts with Ltp2 via the DUF35 C-terminal region of ChsH2.

Functionally, probably involved in bile acid degradation. The chain is Probable enoyl-CoA hydratase alpha subunit from Thermomonospora curvata (strain ATCC 19995 / DSM 43183 / JCM 3096 / KCTC 9072 / NBRC 15933 / NCIMB 10081 / Henssen B9).